The primary structure comprises 291 residues: Small ribosomal subunit protein uS2 (291 aa).

Residues 270–291 (NINEEANTEFEQALSDADEDKN) form a disordered region.

This sequence belongs to the universal ribosomal protein uS2 family.

The protein is Small ribosomal subunit protein uS2 of Rickettsia bellii (strain OSU 85-389).